The sequence spans 598 residues: Nicotinamide riboside transporter 1 (598 aa).

11 consecutive transmembrane segments (helical) span residues 48–68 (LAYW…SAAL), 71–91 (GLSY…TIIF), 112–132 (FVFG…MSIV), 174–194 (LVGF…KPYH), 197–217 (YLLI…VIYL), 241–261 (AWAW…GSTN), 273–293 (LAIW…VPIF), 372–392 (GALF…YNSS), 395–415 (FLTV…VMIC), 447–467 (AIVA…WEVN), and 484–504 (SFFS…FFPF). 2 positions are modified to phosphoserine: S560 and S572.

Belongs to the purine-cytosine permease (2.A.39) family.

The protein resides in the cell membrane. In terms of biological role, high-affinity pH-dependent nicotinamide riboside transporter which also transports thiamine with low affinity. Involved in 5-fluorocytosine sensitivity. The protein is Nicotinamide riboside transporter 1 (NRT1) of Saccharomyces cerevisiae (strain ATCC 204508 / S288c) (Baker's yeast).